Reading from the N-terminus, the 335-residue chain is Heat-inducible transcription repressor HrcA (335 aa).

Belongs to the HrcA family.

Its function is as follows. Negative regulator of class I heat shock genes (grpE-dnaK-dnaJ and groELS operons). Prevents heat-shock induction of these operons. The protein is Heat-inducible transcription repressor HrcA of Mesomycoplasma hyopneumoniae (strain 232) (Mycoplasma hyopneumoniae).